The chain runs to 363 residues: Phospho-N-acetylmuramoyl-pentapeptide-transferase (363 aa).

10 consecutive transmembrane segments (helical) span residues 15–33 (FTTL…SFIF), 82–102 (NTPT…LLIV), 106–126 (FYSM…IIGF), 147–167 (FILQ…NGYI), 183–203 (IVIF…VNLT), 207–227 (DGLA…EIFI), 233–253 (LIIY…FLKF), 260–280 (IFMG…ISIL), 285–305 (FTLF…IIQV), and 341–361 (IVEN…VLKI).

This sequence belongs to the glycosyltransferase 4 family. MraY subfamily. Requires Mg(2+) as cofactor.

Its subcellular location is the cell inner membrane. It carries out the reaction UDP-N-acetyl-alpha-D-muramoyl-L-alanyl-gamma-D-glutamyl-meso-2,6-diaminopimeloyl-D-alanyl-D-alanine + di-trans,octa-cis-undecaprenyl phosphate = di-trans,octa-cis-undecaprenyl diphospho-N-acetyl-alpha-D-muramoyl-L-alanyl-D-glutamyl-meso-2,6-diaminopimeloyl-D-alanyl-D-alanine + UMP. It functions in the pathway cell wall biogenesis; peptidoglycan biosynthesis. Catalyzes the initial step of the lipid cycle reactions in the biosynthesis of the cell wall peptidoglycan: transfers peptidoglycan precursor phospho-MurNAc-pentapeptide from UDP-MurNAc-pentapeptide onto the lipid carrier undecaprenyl phosphate, yielding undecaprenyl-pyrophosphoryl-MurNAc-pentapeptide, known as lipid I. This chain is Phospho-N-acetylmuramoyl-pentapeptide-transferase, found in Prochlorococcus marinus (strain MIT 9515).